The following is a 263-amino-acid chain: MSGKDDYYNRAKQEGYRARSAYKLQQLDDTAGLLGEGRTVVDLGAAPGGWMQVAAERIGERGTLVGVDRQTIDDLEDPEPTVEYVRGDMTEDSTKDEIREIVGESDGSGGPVDVVISDMAPNMTGQYDLDHARSVHLVRQAFEVATDLLDAGGDFCAKVFDGQDLDDLIADIEPEFEYVREVRPDASRDSSSELYLVAKHRLTGPVREGDIVEATIEDIGEEGDGIAKVENFTVFVSGVEDGETVEVRIDDVKPRYAFAEPVE.

S-adenosyl-L-methionine contacts are provided by G48, W50, D68, D88, and D118. The active-site Proton acceptor is K158. The region spanning 205-263 (PVREGDIVEATIEDIGEEGDGIAKVENFTVFVSGVEDGETVEVRIDDVKPRYAFAEPVE) is the TRAM domain.

It belongs to the class I-like SAM-binding methyltransferase superfamily. RNA methyltransferase RlmE family.

The protein resides in the cytoplasm. It carries out the reaction uridine(2552) in 23S rRNA + S-adenosyl-L-methionine = 2'-O-methyluridine(2552) in 23S rRNA + S-adenosyl-L-homocysteine + H(+). Specifically methylates the uridine in position 2552 of 23S rRNA at the 2'-O position of the ribose in the fully assembled 50S ribosomal subunit. The sequence is that of Ribosomal RNA large subunit methyltransferase E from Haloarcula marismortui (strain ATCC 43049 / DSM 3752 / JCM 8966 / VKM B-1809) (Halobacterium marismortui).